The sequence spans 452 residues: Probable diguanylate cyclase DgcT (452 aa).

Topologically, residues 1–7 (MEKDYLR) are cytoplasmic. The helical transmembrane segment at 8 to 28 (ISSTVLVSLLFGLALVLVNSW) threads the bilayer. Over 29–45 (FNQPGVEEVVPRSTYLM) the chain is Periplasmic. The helical transmembrane segment at 46 to 66 (VMIALFFIDTVAFIFMQLYFI) threads the bilayer. At 67-74 (YDRRQFSN) the chain is on the cytoplasmic side. The helical transmembrane segment at 75–95 (CVLSLAFLSCLIYFVITVIII) threads the bilayer. Over 96–111 (QQIIEERLTSSVVQND) the chain is Periplasmic. A helical membrane pass occupies residues 112 to 132 (IAIYYLFRQMSLCILIFLALV). At 133 to 148 (NKVSENTKQRNLFSKK) the chain is on the cytoplasmic side. Residues 149–169 (MTLCISLFFVFGGPIVAHILS) traverse the membrane as a helical segment. Residues 170–195 (SHYESYNLHIAELTNENGQVVWKASY) are Periplasmic-facing. The helical transmembrane segment at 196–216 (VTIMIFMWLTLLSVNLYFNGL) threads the bilayer. At 217-219 (RYD) the chain is on the cytoplasmic side. Residues 220–240 (IWNGVTVIAFCAVLYNISLLF) form a helical membrane-spanning segment. Topologically, residues 241-254 (MSRYSVSTWYISRT) are periplasmic. The helical transmembrane segment at 255-275 (IEVVSKLTVMVIFMCHIFSAL) threads the bilayer. The Cytoplasmic segment spans residues 276-452 (RVTKNIAHRD…RDVVNFCESP (177 aa)). Residues 310–445 (TPYCVMIMDI…GRNKVVVRDV (136 aa)) form the GGDEF domain. Residues aspartate 318 and isoleucine 319 each contribute to the Mg(2+) site. Substrate-binding residues include asparagine 326, histidine 331, and aspartate 335. Mg(2+) is bound at residue glutamate 361. Catalysis depends on glutamate 361, which acts as the Proton acceptor. Arginine 381 provides a ligand contact to substrate.

In terms of assembly, homodimer. Mg(2+) serves as cofactor.

It localises to the cell inner membrane. The catalysed reaction is 2 GTP = 3',3'-c-di-GMP + 2 diphosphate. Its pathway is purine metabolism; 3',5'-cyclic di-GMP biosynthesis. Probably catalyzes the synthesis of cyclic-di-GMP (c-di-GMP) via the condensation of 2 GTP molecules. Overexpression leads to a strong repression of swimming; swimming returns to normal when residues 359-360 are both mutated to Ala. Overexpression also leads to a 20-fold increase in c-di-GMP levels in vivo. Cyclic-di-GMP is a second messenger which controls cell surface-associated traits in bacteria. The chain is Probable diguanylate cyclase DgcT from Escherichia coli (strain K12).